Reading from the N-terminus, the 400-residue chain is CCA-adding enzyme (400 aa).

ATP contacts are provided by glycine 28 and arginine 31. Glycine 28 and arginine 31 together coordinate CTP. Mg(2+) is bound by residues aspartate 41 and aspartate 43. ATP is bound by residues arginine 112, aspartate 155, arginine 158, arginine 161, and arginine 164. CTP contacts are provided by arginine 112, aspartate 155, arginine 158, arginine 161, and arginine 164.

Belongs to the tRNA nucleotidyltransferase/poly(A) polymerase family. Bacterial CCA-adding enzyme type 3 subfamily. As to quaternary structure, homodimer. Requires Mg(2+) as cofactor.

The catalysed reaction is a tRNA precursor + 2 CTP + ATP = a tRNA with a 3' CCA end + 3 diphosphate. The enzyme catalyses a tRNA with a 3' CCA end + 2 CTP + ATP = a tRNA with a 3' CCACCA end + 3 diphosphate. Functionally, catalyzes the addition and repair of the essential 3'-terminal CCA sequence in tRNAs without using a nucleic acid template. Adds these three nucleotides in the order of C, C, and A to the tRNA nucleotide-73, using CTP and ATP as substrates and producing inorganic pyrophosphate. tRNA 3'-terminal CCA addition is required both for tRNA processing and repair. Also involved in tRNA surveillance by mediating tandem CCA addition to generate a CCACCA at the 3' terminus of unstable tRNAs. While stable tRNAs receive only 3'-terminal CCA, unstable tRNAs are marked with CCACCA and rapidly degraded. The protein is CCA-adding enzyme of Staphylococcus aureus (strain Mu3 / ATCC 700698).